A 712-amino-acid chain; its full sequence is Polyribonucleotide nucleotidyltransferase (712 aa).

Mg(2+)-binding residues include D487 and D493. Residues P554–I613 enclose the KH domain. One can recognise an S1 motif domain in the interval G623–K691.

The protein belongs to the polyribonucleotide nucleotidyltransferase family. Mg(2+) is required as a cofactor.

It localises to the cytoplasm. It carries out the reaction RNA(n+1) + phosphate = RNA(n) + a ribonucleoside 5'-diphosphate. Involved in mRNA degradation. Catalyzes the phosphorolysis of single-stranded polyribonucleotides processively in the 3'- to 5'-direction. The protein is Polyribonucleotide nucleotidyltransferase of Rhizobium etli (strain ATCC 51251 / DSM 11541 / JCM 21823 / NBRC 15573 / CFN 42).